Reading from the N-terminus, the 345-residue chain is Phosphoribosylformylglycinamidine cyclo-ligase (345 aa).

The protein belongs to the AIR synthase family.

Its subcellular location is the cytoplasm. It catalyses the reaction 2-formamido-N(1)-(5-O-phospho-beta-D-ribosyl)acetamidine + ATP = 5-amino-1-(5-phospho-beta-D-ribosyl)imidazole + ADP + phosphate + H(+). It participates in purine metabolism; IMP biosynthesis via de novo pathway; 5-amino-1-(5-phospho-D-ribosyl)imidazole from N(2)-formyl-N(1)-(5-phospho-D-ribosyl)glycinamide: step 2/2. The protein is Phosphoribosylformylglycinamidine cyclo-ligase of Bifidobacterium longum (strain DJO10A).